We begin with the raw amino-acid sequence, 81 residues long: NADH-ubiquinone oxidoreductase chain 6 (81 aa).

The next 3 membrane-spanning stretches (helical) occupy residues 1–21, 27–47, and 48–68; these read MTYF…GVAS, YGVV…LSLG, and VSFV…VVFV.

This sequence belongs to the complex I subunit 6 family.

Its subcellular location is the mitochondrion membrane. It catalyses the reaction a ubiquinone + NADH + 5 H(+)(in) = a ubiquinol + NAD(+) + 4 H(+)(out). Core subunit of the mitochondrial membrane respiratory chain NADH dehydrogenase (Complex I) that is believed to belong to the minimal assembly required for catalysis. Complex I functions in the transfer of electrons from NADH to the respiratory chain. The immediate electron acceptor for the enzyme is believed to be ubiquinone. The protein is NADH-ubiquinone oxidoreductase chain 6 (MT-ND6) of Anas platyrhynchos (Mallard).